The primary structure comprises 65 residues: UPF0291 protein BBR47_33060 (65 aa).

Belongs to the UPF0291 family.

Its subcellular location is the cytoplasm. This is UPF0291 protein BBR47_33060 from Brevibacillus brevis (strain 47 / JCM 6285 / NBRC 100599).